Here is a 224-residue protein sequence, read N- to C-terminus: Heme response regulator HssR (224 aa).

The Response regulatory domain occupies 3 to 116 (QCLVVDDDSR…ELIFRIRAVL (114 aa)). Asp-52 is subject to 4-aspartylphosphate. A DNA-binding region (ompR/PhoB-type) is located at residues 124 to 222 (NSEMTIGNLT…VRGQGYKVEN (99 aa)).

Post-translationally, phosphorylated by HssS.

The protein localises to the cytoplasm. Functionally, member of the two-component regulatory system HssS/HssR involved in intracellular heme homeostasis and tempering of staphylococcal virulence. Phosphorylated HssR binds to a direct repeat sequence within hrtAB promoter and activates the expression of hrtAB, an efflux pump, in response to extracellular heme, hemin, hemoglobin or blood. This is Heme response regulator HssR (hssR) from Staphylococcus aureus (strain bovine RF122 / ET3-1).